Here is a 423-residue protein sequence, read N- to C-terminus: Tyrosine--tRNA ligase (423 aa).

Tyrosine 35 contacts L-tyrosine. Positions 40-49 (PTAPSLHAGH) match the 'HIGH' region motif. L-tyrosine contacts are provided by tyrosine 170 and glutamine 174. The short motif at 230–234 (KFGKS) is the 'KMSKS' region element. Position 233 (lysine 233) interacts with ATP. The S4 RNA-binding domain occupies 355 to 412 (DLITDLLVATGLSASKGAARRTIAEGGVSVNNVKIDSDEWTPQASDFLHGRWLVLRRG).

Belongs to the class-I aminoacyl-tRNA synthetase family. TyrS type 1 subfamily. In terms of assembly, homodimer.

The protein resides in the cytoplasm. It catalyses the reaction tRNA(Tyr) + L-tyrosine + ATP = L-tyrosyl-tRNA(Tyr) + AMP + diphosphate + H(+). Functionally, catalyzes the attachment of tyrosine to tRNA(Tyr) in a two-step reaction: tyrosine is first activated by ATP to form Tyr-AMP and then transferred to the acceptor end of tRNA(Tyr). The protein is Tyrosine--tRNA ligase of Mycobacterium sp. (strain JLS).